The following is a 424-amino-acid chain: Envelope glycoprotein M (424 aa).

Topologically, residues 1–23 are intravirion; the sequence is MASRARMERNYRGLSHIDYVHKK. Residues 24–44 traverse the membrane as a helical segment; that stretch reads MWVVQAVCFGIAVLVFFGTLV. Over 45-94 the chain is Virion surface; sequence AASINLTEGFPCFFAAVVDYRTVNTTLVHTGLTYPRLGGVVPVLFFQTKA. The chain crosses the membrane as a helical span at residues 95–115; it reads VVFFFYATSIVFVFLVCYITV. Residues 116–143 are Intravirion-facing; that stretch reads GAIISSKKHVGAAYMGSGAFVFSLMASP. The helical transmembrane segment at 144-164 threads the bilayer; sequence LTILLGTVSIWLLQAVVIVLA. At 165-166 the chain is on the virion surface side; it reads HK. The chain crosses the membrane as a helical span at residues 167-187; it reads LIVLAAAVYLVHFSTITFFYG. The Intravirion portion of the chain corresponds to 188 to 226; sequence YFCGRGVDSKVYAEDISSAKDIDGSLHKLIGNVRAMMVN. Residues 227–247 traverse the membrane as a helical segment; that stretch reads LLSIVYSIILIMSSLMFGMLL. Residues 248–261 are Virion surface-facing; the sequence is ANSFTLKFWHVIVT. The chain crosses the membrane as a helical span at residues 262 to 282; that stretch reads VLITTSVLTLIYLLVIEFLIA. A topological domain (intravirion) is located at residue R283. A helical transmembrane segment spans residues 284–304; sequence YVHIILGAYIGLLIGYGMLWT. The Virion surface portion of the chain corresponds to 305–327; that stretch reads TTCDYVNRFYYAMGANASNLRIA. The chain crosses the membrane as a helical span at residues 328–348; that stretch reads CHSVLAVFTVLILLAMVVRLI. Residues 349–424 are Intravirion-facing; sequence RASLYHRRRS…YSGSESEWDD (76 aa). The disordered stretch occupies residues 382–424; that stretch reads SYKQRGSQSEDERALTQSRSAEASDEDTIYDRVYSGSESEWDD.

This sequence belongs to the herpesviridae glycoprotein M family. As to quaternary structure, interacts (via N-terminus) with gN (via N-terminus). The gM-gN heterodimer forms the gCII complex.

Its subcellular location is the virion membrane. It is found in the host Golgi apparatus. The protein localises to the host trans-Golgi network. It localises to the host endosome membrane. The protein resides in the host nucleus inner membrane. Envelope glycoprotein important for virion assembly and egress. Plays a role in the correct incorporation of gH-gL into virion membrane. Directs the glycoprotein N (gN) to the host trans-Golgi network. The sequence is that of Envelope glycoprotein M from Gallid herpesvirus 2 (strain Chicken/Md5/ATCC VR-987) (GaHV-2).